A 251-amino-acid polypeptide reads, in one-letter code: Hydroxyacylglutathione hydrolase (251 aa).

Zn(2+)-binding residues include histidine 53, histidine 55, aspartate 57, histidine 58, histidine 110, aspartate 127, and histidine 165.

The protein belongs to the metallo-beta-lactamase superfamily. Glyoxalase II family. Monomer. Zn(2+) is required as a cofactor.

It catalyses the reaction an S-(2-hydroxyacyl)glutathione + H2O = a 2-hydroxy carboxylate + glutathione + H(+). The protein operates within secondary metabolite metabolism; methylglyoxal degradation; (R)-lactate from methylglyoxal: step 2/2. Its function is as follows. Thiolesterase that catalyzes the hydrolysis of S-D-lactoyl-glutathione to form glutathione and D-lactic acid. This is Hydroxyacylglutathione hydrolase from Escherichia coli O9:H4 (strain HS).